A 232-amino-acid polypeptide reads, in one-letter code: 7-cyano-7-deazaguanine synthase (232 aa).

7–17 (LSGGLDSTVVT) is a binding site for ATP. Zn(2+) contacts are provided by Cys-195, Cys-206, Cys-209, and Cys-212.

Belongs to the QueC family. The cofactor is Zn(2+).

It carries out the reaction 7-carboxy-7-deazaguanine + NH4(+) + ATP = 7-cyano-7-deazaguanine + ADP + phosphate + H2O + H(+). The protein operates within purine metabolism; 7-cyano-7-deazaguanine biosynthesis. Catalyzes the ATP-dependent conversion of 7-carboxy-7-deazaguanine (CDG) to 7-cyano-7-deazaguanine (preQ(0)). The polypeptide is 7-cyano-7-deazaguanine synthase (Methanocaldococcus jannaschii (strain ATCC 43067 / DSM 2661 / JAL-1 / JCM 10045 / NBRC 100440) (Methanococcus jannaschii)).